The following is a 216-amino-acid chain: RNA pyrophosphohydrolase (216 aa).

Residues 6–149 form the Nudix hydrolase domain; it reads GFRPNVGIIL…KRDVYQLALT (144 aa). Positions 38 to 59 match the Nudix box motif; sequence GGIKYGETPMQAMYRELHEETG.

This sequence belongs to the Nudix hydrolase family. RppH subfamily. The cofactor is a divalent metal cation.

In terms of biological role, accelerates the degradation of transcripts by removing pyrophosphate from the 5'-end of triphosphorylated RNA, leading to a more labile monophosphorylated state that can stimulate subsequent ribonuclease cleavage. The polypeptide is RNA pyrophosphohydrolase (Burkholderia ambifaria (strain MC40-6)).